A 238-amino-acid chain; its full sequence is Ribosomal RNA small subunit methyltransferase G (238 aa).

S-adenosyl-L-methionine is bound by residues glycine 77, phenylalanine 82, 128-129, and arginine 147; that span reads AE. Positions 216–238 are disordered; sequence RKERSTPKKYPRKPGTPNKQPLS.

Belongs to the methyltransferase superfamily. RNA methyltransferase RsmG family.

It localises to the cytoplasm. Its function is as follows. Specifically methylates the N7 position of guanine in position 535 of 16S rRNA. The polypeptide is Ribosomal RNA small subunit methyltransferase G (Halalkalibacterium halodurans (strain ATCC BAA-125 / DSM 18197 / FERM 7344 / JCM 9153 / C-125) (Bacillus halodurans)).